The primary structure comprises 239 residues: mRNA turnover protein 4 homolog (239 aa).

Positions 215–239 (FQQMGDDLPESASESTEESDSEDDD) are disordered. Ser225, Ser229, and Ser233 each carry phosphoserine. Positions 229–239 (STEESDSEDDD) are enriched in acidic residues.

This sequence belongs to the universal ribosomal protein uL10 family. As to quaternary structure, associates with the pre-60S ribosomal particle. Interacts with MINAS-60 (product of an alternative open reading frame of RBM10).

The protein resides in the nucleus. Its subcellular location is the nucleolus. It is found in the cytoplasm. Functionally, component of the ribosome assembly machinery. Nuclear paralog of the ribosomal protein P0, it binds pre-60S subunits at an early stage of assembly in the nucleolus, and is replaced by P0 in cytoplasmic pre-60S subunits and mature 80S ribosomes. The polypeptide is mRNA turnover protein 4 homolog (MRTO4) (Homo sapiens (Human)).